Reading from the N-terminus, the 285-residue chain is CCR4-NOT transcription complex subunit 7 (285 aa).

A divalent metal cation-binding residues include aspartate 40, glutamate 42, aspartate 161, aspartate 230, and glutamate 278.

It belongs to the CAF1 family. Component of the CCR4-NOT complex. Mn(2+) serves as cofactor. Requires Mg(2+) as cofactor. The cofactor is Co(2+).

The protein resides in the nucleus. Its subcellular location is the cytoplasm. It catalyses the reaction Exonucleolytic cleavage of poly(A) to 5'-AMP.. Functionally, has 3'-5' poly(A) exoribonuclease activity for synthetic poly(A) RNA substrate. Catalytic component of the CCR4-NOT complex which is one of the major cellular mRNA deadenylases and is linked to various cellular processes including bulk mRNA degradation, miRNA-mediated repression, translational repression during translational initiation and general transcription regulation. During miRNA-mediated repression the complex also seems to act as translational repressor during translational initiation. Additional complex functions may be a consequence of its influence on mRNA expression. The polypeptide is CCR4-NOT transcription complex subunit 7 (CNOT7) (Gallus gallus (Chicken)).